We begin with the raw amino-acid sequence, 232 residues long: MSAAIWVVVPAAGRGARFGAPMPKQYLQAGGQILLAHTLDALLAHPAVAGAMVVIGPDDADWPGWSEWAGKPVLTCIGGATRAASVLAGLQALPETVRADEFVLVHDAARPNLSPADLGRLLEVGRADPVGAILAAPVRDTLKRAGDDGGIDGTEPRERLWRALTPQLFRRHQLSRALSEAATAGVEVTDEAMAMERQGQRPLLVEGSEDNFKVTTPADLDRFEFVLSRRAG.

Belongs to the IspD/TarI cytidylyltransferase family. IspD subfamily.

It carries out the reaction 2-C-methyl-D-erythritol 4-phosphate + CTP + H(+) = 4-CDP-2-C-methyl-D-erythritol + diphosphate. The protein operates within isoprenoid biosynthesis; isopentenyl diphosphate biosynthesis via DXP pathway; isopentenyl diphosphate from 1-deoxy-D-xylulose 5-phosphate: step 2/6. In terms of biological role, catalyzes the formation of 4-diphosphocytidyl-2-C-methyl-D-erythritol from CTP and 2-C-methyl-D-erythritol 4-phosphate (MEP). This Stenotrophomonas maltophilia (strain R551-3) protein is 2-C-methyl-D-erythritol 4-phosphate cytidylyltransferase.